A 611-amino-acid polypeptide reads, in one-letter code: Rho-related BTB domain-containing protein 3 (611 aa).

The tract at residues 1-175 is rho-like; that stretch reads MSIHIVALGN…KELGATYLEL (175 aa). BTB domains follow at residues 254–356 and 420–487; these read VDVV…QWEE and ADVV…CPAG. Residues 420 to 611 form an interaction with Rab9 region; it reads ADVVFEIQGT…HSRKCRCLVM (192 aa).

In terms of assembly, interacts with RAB9A and RAB9B (at lower level compared to RAB9A-binding). Interacts with M6PRBP1/TIP47. As to expression, ubiquitous. Highly expressed in neural and cardiac tissues, pancreas, placenta and testis.

The protein resides in the golgi apparatus. Functionally, rab9-regulated ATPase required for endosome to Golgi transport. Involved in transport vesicle docking at the Golgi complex, possibly by participating in release M6PRBP1/TIP47 from vesicles to permit their efficient docking and fusion at the Golgi. Specifically binds Rab9, but not other Rab proteins. Has low intrinsic ATPase activity due to autoinhibition, which is relieved by Rab9. This chain is Rho-related BTB domain-containing protein 3 (RHOBTB3), found in Homo sapiens (Human).